The sequence spans 535 residues: E3 ubiquitin-protein ligase rnf168 (535 aa).

The RING-type zinc-finger motif lies at cysteine 16–arginine 55. Positions leucine 112–glutamate 130 match the LR motif 1 motif. The short motif at glutamate 145–alanine 153 is the UMI motif element. 2 consecutive short sequence motifs (MIU motif) follow at residues isoleucine 170–alanine 193 and arginine 406–lysine 429. Basic and acidic residues predominate over residues lysine 429–leucine 443. A disordered region spans residues lysine 429–lysine 535. Residues arginine 433–arginine 444 carry the LR motif 2 motif. 2 stretches are compositionally biased toward polar residues: residues asparagine 462–tyrosine 478 and isoleucine 492–glutamate 507.

It belongs to the RNF168 family. In terms of assembly, monomer.

The protein resides in the nucleus. The enzyme catalyses S-ubiquitinyl-[E2 ubiquitin-conjugating enzyme]-L-cysteine + [acceptor protein]-L-lysine = [E2 ubiquitin-conjugating enzyme]-L-cysteine + N(6)-ubiquitinyl-[acceptor protein]-L-lysine.. It functions in the pathway protein modification; protein ubiquitination. Its function is as follows. E3 ubiquitin-protein ligase required for accumulation of repair proteins to sites of DNA damage. Acts with ube2n/ubc13 to amplify the rnf8-dependent histone ubiquitination. Recruited to sites of DNA damage at double-strand breaks (DSBs) by binding to ubiquitinated histone H2A and ubiquitinates histone H2A and H2AX, leading to amplify the rnf8-dependent H2A ubiquitination and promoting the formation of 'Lys-63'-linked ubiquitin conjugates. This leads to concentrate ubiquitinated histones H2A and H2AX at DNA lesions to the threshold required for recruitment of tp53bp1 and brca1. Catalyzes monoubiquitination of 'Lys-13' and 'Lys-15' of nucleosomal histone H2A (H2AK13Ub and H2AK15Ub, respectively). In Xenopus tropicalis (Western clawed frog), this protein is E3 ubiquitin-protein ligase rnf168.